The following is a 329-amino-acid chain: Beta-ketoacyl-[acyl-carrier-protein] synthase III (329 aa).

Active-site residues include Cys113 and His256. An ACP-binding region spans residues 257 to 261; it reads QANQR. Asn286 is an active-site residue.

It belongs to the thiolase-like superfamily. FabH family. As to quaternary structure, homodimer.

It localises to the cytoplasm. It carries out the reaction malonyl-[ACP] + acetyl-CoA + H(+) = 3-oxobutanoyl-[ACP] + CO2 + CoA. It participates in lipid metabolism; fatty acid biosynthesis. Its function is as follows. Catalyzes the condensation reaction of fatty acid synthesis by the addition to an acyl acceptor of two carbons from malonyl-ACP. Catalyzes the first condensation reaction which initiates fatty acid synthesis and may therefore play a role in governing the total rate of fatty acid production. Possesses both acetoacetyl-ACP synthase and acetyl transacylase activities. Its substrate specificity determines the biosynthesis of branched-chain and/or straight-chain of fatty acids. This is Beta-ketoacyl-[acyl-carrier-protein] synthase III from Natranaerobius thermophilus (strain ATCC BAA-1301 / DSM 18059 / JW/NM-WN-LF).